The primary structure comprises 469 residues: Glutamate--tRNA ligase (469 aa).

The 'HIGH' region signature appears at 9 to 19; sequence PSPTGFLHVGG. The Zn(2+) site is built by C98, C100, C125, and D127. The short motif at 236 to 240 is the 'KMSKS' region element; that stretch reads KLSKR. An ATP-binding site is contributed by K239.

The protein belongs to the class-I aminoacyl-tRNA synthetase family. Glutamate--tRNA ligase type 1 subfamily. Monomer. Requires Zn(2+) as cofactor.

The protein resides in the cytoplasm. The enzyme catalyses tRNA(Glu) + L-glutamate + ATP = L-glutamyl-tRNA(Glu) + AMP + diphosphate. In terms of biological role, catalyzes the attachment of glutamate to tRNA(Glu) in a two-step reaction: glutamate is first activated by ATP to form Glu-AMP and then transferred to the acceptor end of tRNA(Glu). The protein is Glutamate--tRNA ligase of Shewanella sp. (strain W3-18-1).